Here is a 704-residue protein sequence, read N- to C-terminus: Polyribonucleotide nucleotidyltransferase 4 (704 aa).

2 residues coordinate Mg(2+): aspartate 483 and aspartate 489. In terms of domain architecture, KH spans 550–609 (PRVLKMKIHPDKIRDVIGSGGKTINRIIDETGVKIDIDNDGTIFIAAESQEAVEKAIIII). The S1 motif domain maps to 619–687 (GQNYTGKVIK…QQGKINLSRK (69 aa)).

This sequence belongs to the polyribonucleotide nucleotidyltransferase family. It depends on Mg(2+) as a cofactor.

Its subcellular location is the cytoplasm. The enzyme catalyses RNA(n+1) + phosphate = RNA(n) + a ribonucleoside 5'-diphosphate. Functionally, involved in mRNA degradation. Catalyzes the phosphorolysis of single-stranded polyribonucleotides processively in the 3'- to 5'-direction. The sequence is that of Polyribonucleotide nucleotidyltransferase 4 from Alkaliphilus metalliredigens (strain QYMF).